The sequence spans 245 residues: Probable phosphatase PC1_1798 (245 aa).

9 residues coordinate Zn(2+): His-7, His-9, His-15, His-40, Glu-73, His-101, His-131, Asp-192, and His-194.

Belongs to the PHP family. In terms of assembly, homotrimer. The cofactor is Zn(2+).

This Pectobacterium carotovorum subsp. carotovorum (strain PC1) protein is Probable phosphatase PC1_1798.